The chain runs to 47 residues: Photosystem II reaction center protein K (47 aa).

A propeptide spanning residues 1 to 10 (MALINFDLLA) is cleaved from the precursor. The helical transmembrane segment at 26-46 (LPLIPLFFFLLVFVWQAAVGF) threads the bilayer.

It belongs to the PsbK family. As to quaternary structure, PSII is composed of 1 copy each of membrane proteins PsbA, PsbB, PsbC, PsbD, PsbE, PsbF, PsbH, PsbI, PsbJ, PsbK, PsbL, PsbM, PsbT, PsbX, PsbY, Psb30/Ycf12, peripheral proteins PsbO, CyanoQ (PsbQ), PsbU, PsbV and a large number of cofactors. It forms dimeric complexes.

The protein resides in the cellular thylakoid membrane. One of the components of the core complex of photosystem II (PSII). PSII is a light-driven water:plastoquinone oxidoreductase that uses light energy to abstract electrons from H(2)O, generating O(2) and a proton gradient subsequently used for ATP formation. It consists of a core antenna complex that captures photons, and an electron transfer chain that converts photonic excitation into a charge separation. This Prochlorococcus marinus (strain NATL1A) protein is Photosystem II reaction center protein K.